We begin with the raw amino-acid sequence, 124 residues long: Small ribosomal subunit protein uS12 (124 aa).

The segment at 1–25 (MATINQLVRKPRQATTYKSASPALD) is disordered. Position 89 is a 3-methylthioaspartic acid (Asp-89).

It belongs to the universal ribosomal protein uS12 family. As to quaternary structure, part of the 30S ribosomal subunit. Contacts proteins S8 and S17. May interact with IF1 in the 30S initiation complex.

Functionally, with S4 and S5 plays an important role in translational accuracy. In terms of biological role, interacts with and stabilizes bases of the 16S rRNA that are involved in tRNA selection in the A site and with the mRNA backbone. Located at the interface of the 30S and 50S subunits, it traverses the body of the 30S subunit contacting proteins on the other side and probably holding the rRNA structure together. The combined cluster of proteins S8, S12 and S17 appears to hold together the shoulder and platform of the 30S subunit. This is Small ribosomal subunit protein uS12 from Xanthomonas campestris pv. campestris (strain 8004).